Here is a 308-residue protein sequence, read N- to C-terminus: U-box domain-containing protein 54 (308 aa).

A disordered region spans residues 172-235; sequence FSEFSTSAEK…NESDEDPRLE (64 aa). The segment covering 210 to 227 has biased composition (basic and acidic residues); sequence ESPKKGRKETIEKSKSNE. One can recognise a U-box domain in the interval 232-306; that stretch reads PRLEDFKCPI…KDWLEKNPNY (75 aa).

It carries out the reaction S-ubiquitinyl-[E2 ubiquitin-conjugating enzyme]-L-cysteine + [acceptor protein]-L-lysine = [E2 ubiquitin-conjugating enzyme]-L-cysteine + N(6)-ubiquitinyl-[acceptor protein]-L-lysine.. It participates in protein modification; protein ubiquitination. In terms of biological role, functions as an E3 ubiquitin ligase. This is U-box domain-containing protein 54 (PUB54) from Arabidopsis thaliana (Mouse-ear cress).